Here is an 873-residue protein sequence, read N- to C-terminus: Valine--tRNA ligase (873 aa).

The 'HIGH' region signature appears at 46–56 (PNVTGKLHIGH). A 'KMSKS' region motif is present at residues 525–529 (KMSKS). Lys528 lines the ATP pocket. The stretch at 804 to 873 (NDDFIDKEKM…ELIQDKLNKM (70 aa)) forms a coiled coil.

Belongs to the class-I aminoacyl-tRNA synthetase family. ValS type 1 subfamily. In terms of assembly, monomer.

Its subcellular location is the cytoplasm. The catalysed reaction is tRNA(Val) + L-valine + ATP = L-valyl-tRNA(Val) + AMP + diphosphate. Catalyzes the attachment of valine to tRNA(Val). As ValRS can inadvertently accommodate and process structurally similar amino acids such as threonine, to avoid such errors, it has a 'posttransfer' editing activity that hydrolyzes mischarged Thr-tRNA(Val) in a tRNA-dependent manner. The protein is Valine--tRNA ligase of Mesoplasma florum (strain ATCC 33453 / NBRC 100688 / NCTC 11704 / L1) (Acholeplasma florum).